The following is a 1079-amino-acid chain: Carbamoyl phosphate synthase large chain (1079 aa).

A carboxyphosphate synthetic domain region spans residues 2-403 (PKSTDIKSIL…SIQKAIRGLE (402 aa)). ATP-binding residues include arginine 129, arginine 169, glycine 175, glycine 176, glutamate 208, leucine 210, glutamate 215, glycine 241, isoleucine 242, histidine 243, glutamine 285, and glutamate 299. The region spanning 133-328 (EHSMKKLNLE…IAKIAAKLAI (196 aa)) is the ATP-grasp 1 domain. Residues glutamine 285, glutamate 299, and asparagine 301 each coordinate Mg(2+). Residues glutamine 285, glutamate 299, and asparagine 301 each coordinate Mn(2+). The tract at residues 404 to 553 (VGASGFDSKI…YSTWEDECES (150 aa)) is oligomerization domain. Positions 554 to 936 (HPSKNNKKII…AFSKSMLGAH (383 aa)) are carbamoyl phosphate synthetic domain. The region spanning 679–870 (QKTVNKLRLQ…LAKISVRVMC (192 aa)) is the ATP-grasp 2 domain. Residues arginine 715, glutamine 754, leucine 756, glutamate 761, glycine 786, valine 787, histidine 788, serine 789, glutamine 829, and glutamate 841 each coordinate ATP. 3 residues coordinate Mg(2+): glutamine 829, glutamate 841, and asparagine 843. The Mn(2+) site is built by glutamine 829, glutamate 841, and asparagine 843. Residues 937 to 1079 (TNMKKSGRVL…KKIQLFYTKK (143 aa)) form the MGS-like domain. Residues 937-1079 (TNMKKSGRVL…KKIQLFYTKK (143 aa)) form an allosteric domain region.

The protein belongs to the CarB family. As to quaternary structure, composed of two chains; the small (or glutamine) chain promotes the hydrolysis of glutamine to ammonia, which is used by the large (or ammonia) chain to synthesize carbamoyl phosphate. Tetramer of heterodimers (alpha,beta)4. The cofactor is Mg(2+). It depends on Mn(2+) as a cofactor.

The catalysed reaction is hydrogencarbonate + L-glutamine + 2 ATP + H2O = carbamoyl phosphate + L-glutamate + 2 ADP + phosphate + 2 H(+). It carries out the reaction hydrogencarbonate + NH4(+) + 2 ATP = carbamoyl phosphate + 2 ADP + phosphate + 2 H(+). It participates in amino-acid biosynthesis; L-arginine biosynthesis; carbamoyl phosphate from bicarbonate: step 1/1. The protein operates within pyrimidine metabolism; UMP biosynthesis via de novo pathway; (S)-dihydroorotate from bicarbonate: step 1/3. Functionally, large subunit of the glutamine-dependent carbamoyl phosphate synthetase (CPSase). CPSase catalyzes the formation of carbamoyl phosphate from the ammonia moiety of glutamine, carbonate, and phosphate donated by ATP, constituting the first step of 2 biosynthetic pathways, one leading to arginine and/or urea and the other to pyrimidine nucleotides. The large subunit (synthetase) binds the substrates ammonia (free or transferred from glutamine from the small subunit), hydrogencarbonate and ATP and carries out an ATP-coupled ligase reaction, activating hydrogencarbonate by forming carboxy phosphate which reacts with ammonia to form carbamoyl phosphate. The protein is Carbamoyl phosphate synthase large chain of Buchnera aphidicola subsp. Acyrthosiphon pisum (strain APS) (Acyrthosiphon pisum symbiotic bacterium).